The primary structure comprises 446 residues: tRNA-2-methylthio-N(6)-dimethylallyladenosine synthase (446 aa).

Residues 8-124 (KTYRVKSFGC…LPGMIDAAVA (117 aa)) enclose the MTTase N-terminal domain. Residues cysteine 17, cysteine 53, cysteine 87, cysteine 160, cysteine 164, and cysteine 167 each contribute to the [4Fe-4S] cluster site. The Radical SAM core domain occupies 146–378 (RKSAPSAFLT…QAALNRDQAA (233 aa)). Residues 381 to 442 (AGSVGRTCEV…PNSLAGQLLE (62 aa)) enclose the TRAM domain.

Belongs to the methylthiotransferase family. MiaB subfamily. In terms of assembly, monomer. The cofactor is [4Fe-4S] cluster.

The protein localises to the cytoplasm. The catalysed reaction is N(6)-dimethylallyladenosine(37) in tRNA + (sulfur carrier)-SH + AH2 + 2 S-adenosyl-L-methionine = 2-methylsulfanyl-N(6)-dimethylallyladenosine(37) in tRNA + (sulfur carrier)-H + 5'-deoxyadenosine + L-methionine + A + S-adenosyl-L-homocysteine + 2 H(+). Its function is as follows. Catalyzes the methylthiolation of N6-(dimethylallyl)adenosine (i(6)A), leading to the formation of 2-methylthio-N6-(dimethylallyl)adenosine (ms(2)i(6)A) at position 37 in tRNAs that read codons beginning with uridine. The chain is tRNA-2-methylthio-N(6)-dimethylallyladenosine synthase from Erythrobacter litoralis (strain HTCC2594).